A 1284-amino-acid polypeptide reads, in one-letter code: ABC multidrug transporter atrC (1284 aa).

Residues 1-11 (MKSTAESKETP) are compositionally biased toward basic and acidic residues. The disordered stretch occupies residues 1–24 (MKSTAESKETPSQDESTTSVPCTE). 6 helical membrane-spanning segments follow: residues 55–75 (AVAILAACASGAGIALQNLIF), 99–119 (AAELALYFVYLGIARLVLSYT), 178–198 (IGLLFQGLAAFVTLSLSRLWC), 203–223 (TLICICIPVATIGTTGVVAAV), 282–302 (LLGLLFSAEYTIIYLGYGLAF), and 320–340 (IFTVLLSVVIASINLTLLAPY). Residues 55-346 (AVAILAACAS…LAPYSIEFSR (292 aa)) enclose the ABC transmembrane type-1 1 domain. Positions 381 to 626 (VELENVTFSY…DGVYAGLVKI (246 aa)) constitute an ABC transporter 1 domain. Residues N385 and N401 are each glycosylated (N-linked (GlcNAc...) asparagine). 416 to 423 (GQSGSGKS) lines the ATP pocket. N-linked (GlcNAc...) asparagine glycans are attached at residues N488 and N632. 2 helical membrane-spanning segments follow: residues 705 to 725 (LVVLLGCLGGCAMYPGQAILM) and 745 to 765 (FYASMLIVLAAGCLICYLAVG). An ABC transmembrane type-1 2 domain is found at 705 to 992 (LVVLLGCLGG…LFQWSTSITK (288 aa)). N800 is a glycosylation site (N-linked (GlcNAc...) asparagine). The next 4 membrane-spanning stretches (helical) occupy residues 824–844 (IALVVIAVLQVVTCGILAIAF), 846–866 (WKLGLVVVFGGIPPLVGAGMV), 931–951 (MICFGLTQCIEYWFQALGFWY), and 955–975 (LVSLGETSMYSFFVAFLSVFF). N-linked (GlcNAc...) asparagine glycosylation is present at N995. The ABC transporter 2 domain maps to 1027–1280 (IAMDNVRFSY…GGLYRRMCEA (254 aa)). 1062–1069 (GSSGCGKS) lines the ATP pocket. N-linked (GlcNAc...) asparagine glycosylation occurs at N1122.

This sequence belongs to the ABC transporter superfamily. ABCB family. Multidrug resistance exporter (TC 3.A.1.201) subfamily.

The protein localises to the cell membrane. In terms of biological role, pleiotropic ABC efflux transporter involved in the protection of the cells against a wide range of toxic compounds. The chain is ABC multidrug transporter atrC from Emericella nidulans (Aspergillus nidulans).